The sequence spans 513 residues: Histidine ammonia-lyase (513 aa).

The 5-imidazolinone (Ala-Gly) cross-link spans 143–145; it reads ASG. Ser-144 is subject to 2,3-didehydroalanine (Ser).

The protein belongs to the PAL/histidase family. Contains an active site 4-methylidene-imidazol-5-one (MIO), which is formed autocatalytically by cyclization and dehydration of residues Ala-Ser-Gly.

Its subcellular location is the cytoplasm. It carries out the reaction L-histidine = trans-urocanate + NH4(+). It participates in amino-acid degradation; L-histidine degradation into L-glutamate; N-formimidoyl-L-glutamate from L-histidine: step 1/3. This is Histidine ammonia-lyase from Xanthomonas campestris pv. campestris (strain B100).